A 343-amino-acid polypeptide reads, in one-letter code: E3 ubiquitin-protein ligase RNF113A (343 aa).

Ala-2 carries the post-translational modification N-acetylalanine. Residues 2–60 (AEQLSPGKTTDQVCTFLFKKPGRKVAAGRRKRPICNQESGDSSSSSDEGNTVVRPEKKR) form an important for interaction with SNRNP200/BRR2 region. Ser-6 is modified (phosphoserine). Basic residues predominate over residues 23–34 (GRKVAAGRRKRP). Residues 23–95 (GRKVAAGRRK…EEEEENKSES (73 aa)) are disordered. Low complexity predominate over residues 39–50 (ESGDSSSSSDEG). The segment at 50–61 (GNTVVRPEKKRA) is important for interaction with CXCR4. Ser-84 and Ser-85 each carry phosphoserine. The C3H1-type zinc finger occupies 196-224 (DYQPDICKDYKETGFCGFGDSCKFLHDRS). Ser-253 bears the Phosphoserine mark. The segment at 262-300 (CFICRQTFQNPVVTKCRHYFCESCALQHFRTTPRCYVCD) adopts an RING-type zinc-finger fold. The tract at residues 323–343 (AEGGGASGFPEDPDEDPVPIT) is disordered. Residues 333–343 (EDPDEDPVPIT) are compositionally biased toward acidic residues.

Component of pre-catalytic and catalytic spliceosome complexes. Interacts (via N-terminus) with the spliceosome subunit SNRNP200/BRR2. Component of the minor spliceosome. Within this complex, interacts with SCNM1 and CRIPT.

It localises to the nucleus. It is found in the nucleus speckle. It catalyses the reaction S-ubiquitinyl-[E2 ubiquitin-conjugating enzyme]-L-cysteine + [acceptor protein]-L-lysine = [E2 ubiquitin-conjugating enzyme]-L-cysteine + N(6)-ubiquitinyl-[acceptor protein]-L-lysine.. Its pathway is protein modification; protein ubiquitination. Its function is as follows. Required for pre-mRNA splicing as component of the spliceosome. As a component of the minor spliceosome, involved in the splicing of U12-type introns in pre-mRNAs. E3 ubiquitin-protein ligase that catalyzes the transfer of ubiquitin onto target proteins. Catalyzes polyubiquitination of SNRNP200/BRR2 with non-canonical 'Lys-63'-linked polyubiquitin chains. Plays a role in DNA repair via its role in the synthesis of 'Lys-63'-linked polyubiquitin chains that recruit ALKBH3 and the ASCC complex to sites of DNA damage by alkylating agents. Ubiquitinates CXCR4, leading to its degradation, and thereby contributes to the termination of CXCR4 signaling. In Bos taurus (Bovine), this protein is E3 ubiquitin-protein ligase RNF113A (RNF113A).